The chain runs to 130 residues: Small ribosomal subunit protein uS9 (130 aa).

This sequence belongs to the universal ribosomal protein uS9 family.

This chain is Small ribosomal subunit protein uS9, found in Exiguobacterium sp. (strain ATCC BAA-1283 / AT1b).